Reading from the N-terminus, the 245-residue chain is Eukaryotic translation initiation factor 6 (245 aa).

The protein belongs to the eIF-6 family. Monomer. Associates with the 60S ribosomal subunit.

The protein resides in the cytoplasm. The protein localises to the nucleus. It is found in the nucleolus. Its function is as follows. Binds to the 60S ribosomal subunit and prevents its association with the 40S ribosomal subunit to form the 80S initiation complex in the cytoplasm. May also be involved in ribosome biogenesis. The protein is Eukaryotic translation initiation factor 6 of Ostreococcus lucimarinus (strain CCE9901).